A 291-amino-acid chain; its full sequence is Nucleotide-binding protein Athe_0320 (291 aa).

9 to 16 (GMSGAGKS) lines the ATP pocket. 60-63 (DIRG) lines the GTP pocket.

Belongs to the RapZ-like family.

Displays ATPase and GTPase activities. This is Nucleotide-binding protein Athe_0320 from Caldicellulosiruptor bescii (strain ATCC BAA-1888 / DSM 6725 / KCTC 15123 / Z-1320) (Anaerocellum thermophilum).